A 434-amino-acid polypeptide reads, in one-letter code: uncharacterized protein (434 aa).

The next 11 membrane-spanning stretches (helical) occupy residues 50 to 70 (GSIAFGLSIGFVASVGISFTL), 72 to 92 (TGLLNAWLLFLPTDILGVLAI), 95 to 115 (LMAFGLGAIWGVLILTCLLPV), 135 to 155 (SPVVSAFALFPLVAIFYQFGW), 158 to 178 (SLIAAVVVLMTRVVVVRYFPH), 179 to 199 (LNPESIEIFIGMVMLLGIAIT), 229 to 249 (LPYIAIVGALIAAVASMKIFA), 288 to 308 (GFVPLIATTALATGVYAVAGF), 319 to 339 (PNPMVAAVLGAVVISAEVLLL), 376 to 396 (IFAAIKMAGYTGFSIAVAIYF), and 412 to 432 (VVAVMITGILLNVLYWLGLFV).

It is found in the cell membrane. This is an uncharacterized protein from Escherichia coli (strain K12).